Consider the following 418-residue polypeptide: Diacylglycerol O-acyltransferase 1 (418 aa).

Residues 1–30 form a disordered region; it reads MSGTFNDIRRRKKEEGSPTAGITERHENKS. The Cytoplasmic portion of the chain corresponds to 1–71; that stretch reads MSGTFNDIRR…LAVAWHTSSF (71 aa). S17 carries the phosphoserine modification. Residues 72 to 92 form a helical membrane-spanning segment; sequence VLFSIFTLFAISTPALWVLAI. Over 93–186 the chain is Lumenal; sequence PYMIYFFFDR…DYRNQECTGP (94 aa). The N-linked (GlcNAc...) asparagine glycan is linked to N173. A helical membrane pass occupies residues 187 to 207; it reads TYLFGYHPHGIGALGAFGAFA. Over 208–215 the chain is Cytoplasmic; sequence TEGCNYSK. A helical transmembrane segment spans residues 216–236; sequence IFPGIPISLMTLVTQFHIPLY. At 237-289 the chain is on the lumenal side; that stretch reads RDYLLALGISSVSRKNALRTLSKNQSICIVVGGARESLLSSTNGTQLILNKRK. N-linked (GlcNAc...) asparagine glycans are attached at residues N260 and N279. A helical membrane pass occupies residues 290 to 310; the sequence is GFIKLAIQTGNINLVPVFAFG. Residues 311–418 lie on the Cytoplasmic side of the membrane; that stretch reads EVDCYNVLST…VPDAELKIVG (108 aa).

The protein belongs to the diacylglycerol acyltransferase family.

It localises to the lipid droplet. The protein localises to the endoplasmic reticulum membrane. The enzyme catalyses an acyl-CoA + a 1,2-diacyl-sn-glycerol = a triacyl-sn-glycerol + CoA. It carries out the reaction a 2-acylglycerol + an acyl-CoA = a 1,2-diacylglycerol + CoA. It catalyses the reaction 2-(9Z-octadecenoyl)-glycerol + (9Z)-octadecenoyl-CoA = 1,2-di-(9Z-octadecenoyl)-glycerol + CoA. Its pathway is glycerolipid metabolism; triacylglycerol biosynthesis. Catalyzes the terminal and only committed step in triacylglycerol (TAG) synthesis by using diacylglycerol (DAG) and fatty acyl-CoA as substrates. Required for storage lipid synthesis. Major DAG esterifying enzyme in stationary phase when TAG production is particularly active. Involved in lipid particle synthesis from the endoplasmic reticulum, promoting localized TAG production at discrete ER subdomains, and in ergosterol biosynthesis. Also has monoacylglycerol acyltransferase (MGAT) activity, catalyzing the acyl-CoA-dependent esterification of monoacylglycerol to diacylglycerol. Can also utilize ceramide instead of DAG, acylating the ceramides by attaching a fatty acid to the hydroxy group on the first carbon atom of the long-chain base to produce 1-O-acylceramides. The sequence is that of Diacylglycerol O-acyltransferase 1 (DGA1) from Saccharomyces cerevisiae (strain ATCC 204508 / S288c) (Baker's yeast).